An 860-amino-acid chain; its full sequence is Leucine--tRNA ligase (860 aa).

The 'HIGH' region signature appears at 42–52; it reads PYPSGRLHMGH. Positions 619 to 623 match the 'KMSKS' region motif; sequence KMSKS. K622 serves as a coordination point for ATP.

It belongs to the class-I aminoacyl-tRNA synthetase family.

It is found in the cytoplasm. It carries out the reaction tRNA(Leu) + L-leucine + ATP = L-leucyl-tRNA(Leu) + AMP + diphosphate. This chain is Leucine--tRNA ligase, found in Escherichia coli (strain K12 / MC4100 / BW2952).